Reading from the N-terminus, the 163-residue chain is MKGKAGGKAADAAEKVAASNRRARFDYDVEDTWEAGLVLTGSEVKSLREGNVNLSDAYAMPRGEELWLLNCRIGEYQQAAHFGHAPLRDRKLLMNRAEIDRVRGKVEQRGYTLVPLRIYFKQGWAKVELGLARGRSHEDRRGAIAERESKREMDRALARGRRR.

Residues 138-157 show a composition bias toward basic and acidic residues; sequence EDRRGAIAERESKREMDRAL. Positions 138-163 are disordered; the sequence is EDRRGAIAERESKREMDRALARGRRR.

This sequence belongs to the SmpB family.

It is found in the cytoplasm. In terms of biological role, required for rescue of stalled ribosomes mediated by trans-translation. Binds to transfer-messenger RNA (tmRNA), required for stable association of tmRNA with ribosomes. tmRNA and SmpB together mimic tRNA shape, replacing the anticodon stem-loop with SmpB. tmRNA is encoded by the ssrA gene; the 2 termini fold to resemble tRNA(Ala) and it encodes a 'tag peptide', a short internal open reading frame. During trans-translation Ala-aminoacylated tmRNA acts like a tRNA, entering the A-site of stalled ribosomes, displacing the stalled mRNA. The ribosome then switches to translate the ORF on the tmRNA; the nascent peptide is terminated with the 'tag peptide' encoded by the tmRNA and targeted for degradation. The ribosome is freed to recommence translation, which seems to be the essential function of trans-translation. The chain is SsrA-binding protein from Anaeromyxobacter dehalogenans (strain 2CP-1 / ATCC BAA-258).